We begin with the raw amino-acid sequence, 406 residues long: LIM/homeobox protein Lhx2 (406 aa).

2 consecutive LIM zinc-binding domains span residues 53-105 (CAGC…CKED) and 115-168 (CARC…CRLH). Positions 250–270 (DAEHLDRDQPYPSSQKTKRMR) are disordered. Residues 266-325 (TKRMRTSFKHHQLRTMKSYFAINHNPDAKDLKQLAQKTGLTKRVLQVWFQNARAKFRRNL) constitute a DNA-binding region (homeobox). The short motif at 307–323 (KRVLQVWFQNARAKFRR) is the Nuclear localization signal element. Residues 328 to 356 (QENTGVDKSTDAALQTGTPSGPASELSNA) are compositionally biased toward polar residues. Disordered regions lie at residues 328–374 (QENT…TSPT) and 387–406 (GNLE…TNLF). Residues 357-374 (SLSPSSTPTTLTDLTSPT) are compositionally biased toward low complexity. Over residues 396–406 (SPSQTTLTNLF) the composition is skewed to polar residues.

In terms of assembly, interacts (via LIM domains) with CITED2. Interacts with POU4F2.

It is found in the nucleus. Its function is as follows. Acts as a transcriptional activator. Stimulates the promoter of the alpha-glycoprotein gene. Transcriptional regulatory protein involved in the control of cell differentiation in developing lymphoid and neural cell types. In Homo sapiens (Human), this protein is LIM/homeobox protein Lhx2 (LHX2).